We begin with the raw amino-acid sequence, 101 residues long: uncharacterized protein (101 aa).

This is an uncharacterized protein from Escherichia coli (strain K12).